The chain runs to 131 residues: Large ribosomal subunit protein bL17 (131 aa).

Belongs to the bacterial ribosomal protein bL17 family. As to quaternary structure, part of the 50S ribosomal subunit. Contacts protein L32.

In Cupriavidus necator (strain ATCC 17699 / DSM 428 / KCTC 22496 / NCIMB 10442 / H16 / Stanier 337) (Ralstonia eutropha), this protein is Large ribosomal subunit protein bL17.